The chain runs to 1262 residues: Collagen alpha-1(III) chain (1262 aa).

The signal sequence occupies residues 1–23 (MMSFVQKVSLFILAVFQPSVILA). Positions 24 to 150 (QQDALGGCTH…PSISGGSFSP (127 aa)) are cleaved as a propeptide — N-terminal propeptide. The region spanning 29–88 (GGCTHLGQEYADRDVWKPEPCQICVCDSGSVLCDDIICDDQELDCPNPEIPLGECCPVCP) is the VWFC domain. Disordered regions lie at residues 95–143 (TELP…CPSI) and 160–1000 (GSVG…GGVA). Low complexity predominate over residues 102–118 (GPKGDPGSPGSPGRTGA). The span at 119 to 134 (PGPPGQPGSPGAPGPP) shows a compositional bias: pro residues. Residues 145-164 (GGSFSPQYDSYDVKAGSVGM) are nonhelical region (N-terminal). Residues 165 to 994 (GYPPQPISGF…PGPSGPPGPC (830 aa)) form a triple-helical region region. Residues 167-190 (PPQPISGFPGPPGPSGPPGPPGHA) are compositionally biased toward pro residues. Residues 192–201 (PPGSNGYQGP) are compositionally biased toward low complexity. The span at 202–216 (PGEPGQPGPSGPPGP) shows a compositional bias: pro residues. Basic and acidic residues predominate over residues 228 to 240 (KDGEPGRPGRNGD). The span at 253-264 (PGMPGMPGMKGA) shows a compositional bias: low complexity. 5-hydroxylysine is present on Lys-262. Residues 265–274 (RGFDGKDGAK) show a composition bias toward basic and acidic residues. Low complexity-rich tracts occupy residues 276–295 (DSGAPGPKGEAGQPGANGSP) and 339–376 (TAGFPGSPGFKGEAGPPGPAGASGNPGERGEPGPQGQA). Lys-283 carries the 5-hydroxylysine modification. Residues 389 to 414 (GSPGGKGEMGPSGIPGGPGPPGGRGL) are compositionally biased toward gly residues. Low complexity-rich tracts occupy residues 534–549 (MRGLPGIPGSPGSDGK) and 631–640 (PGPSGSPGLQ). The span at 641-650 (GLPGGPGPAG) shows a compositional bias: gly residues. Over residues 672–684 (PKGENGIPGERGP) the composition is skewed to low complexity. Over residues 692-701 (GARGGPGPAG) the composition is skewed to gly residues. Composition is skewed to low complexity over residues 723–738 (LQGMPGERGASGSPGP), 781–790 (TGPAGAPGPA), 802–817 (QGLPGPAGFPGAPGQN), and 828–838 (PPGLRGEAGPP). The residue at position 859 (Lys-859) is a 5-hydroxylysine. Over residues 863 to 872 (GSPGGPGAAG) the composition is skewed to gly residues. Residues 895–904 (PGVPGPPGHP) show a composition bias toward pro residues. Positions 927–940 (PQGAIGSPGASGAR) are enriched in low complexity. The span at 976–993 (AGPPGQPGLPGPSGPPGP) shows a compositional bias: pro residues. Positions 995–1003 (CGGGVASLG) are nonhelical region (C-terminal). The propeptide at 1018–1262 (DEPKENEINL…GVDVGPVCFL (245 aa)) is C-terminal propeptide. Residues 1028-1262 (GEIMSSMKSI…GVDVGPVCFL (235 aa)) form the Fibrillar collagen NC1 domain. 3 cysteine pairs are disulfide-bonded: Cys-1058–Cys-1090, Cys-1098–Cys-1260, and Cys-1168–Cys-1213. Ca(2+) contacts are provided by Asp-1076, Asn-1078, Gln-1079, Cys-1081, and Asp-1084. Asn-1163 carries N-linked (GlcNAc...) asparagine glycosylation.

It belongs to the fibrillar collagen family. Trimers of identical alpha 1(III) chains. The chains are linked to each other by interchain disulfide bonds. Trimers are also cross-linked via hydroxylysines. Prolines at the third position of the tripeptide repeating unit (G-X-Y) are hydroxylated in some or all of the chains.

It is found in the secreted. The protein resides in the extracellular space. It localises to the extracellular matrix. In terms of biological role, collagen type III occurs in most soft connective tissues along with type I collagen. This is Collagen alpha-1(III) chain (COL3A1) from Gallus gallus (Chicken).